Consider the following 424-residue polypeptide: Serine--tRNA ligase (424 aa).

231–233 (TAE) serves as a coordination point for L-serine. 262–264 (RSE) contacts ATP. Glutamate 285 contacts L-serine. 349 to 352 (EISS) contacts ATP. Serine 385 is an L-serine binding site.

The protein belongs to the class-II aminoacyl-tRNA synthetase family. Type-1 seryl-tRNA synthetase subfamily. In terms of assembly, homodimer. The tRNA molecule binds across the dimer.

It is found in the cytoplasm. The enzyme catalyses tRNA(Ser) + L-serine + ATP = L-seryl-tRNA(Ser) + AMP + diphosphate + H(+). It catalyses the reaction tRNA(Sec) + L-serine + ATP = L-seryl-tRNA(Sec) + AMP + diphosphate + H(+). It participates in aminoacyl-tRNA biosynthesis; selenocysteinyl-tRNA(Sec) biosynthesis; L-seryl-tRNA(Sec) from L-serine and tRNA(Sec): step 1/1. In terms of biological role, catalyzes the attachment of serine to tRNA(Ser). Is also able to aminoacylate tRNA(Sec) with serine, to form the misacylated tRNA L-seryl-tRNA(Sec), which will be further converted into selenocysteinyl-tRNA(Sec). This is Serine--tRNA ligase from Bacillus cereus (strain B4264).